The following is a 143-amino-acid chain: Nucleoside diphosphate kinase (143 aa).

Residues lysine 11, phenylalanine 59, arginine 87, threonine 93, arginine 104, and asparagine 114 each contribute to the ATP site. Histidine 117 acts as the Pros-phosphohistidine intermediate in catalysis.

Belongs to the NDK family. As to quaternary structure, homotetramer. Mg(2+) is required as a cofactor.

Its subcellular location is the cytoplasm. It carries out the reaction a 2'-deoxyribonucleoside 5'-diphosphate + ATP = a 2'-deoxyribonucleoside 5'-triphosphate + ADP. The enzyme catalyses a ribonucleoside 5'-diphosphate + ATP = a ribonucleoside 5'-triphosphate + ADP. Its function is as follows. Major role in the synthesis of nucleoside triphosphates other than ATP. The ATP gamma phosphate is transferred to the NDP beta phosphate via a ping-pong mechanism, using a phosphorylated active-site intermediate. This chain is Nucleoside diphosphate kinase, found in Shewanella woodyi (strain ATCC 51908 / MS32).